Here is a 124-residue protein sequence, read N- to C-terminus: Probable glycine cleavage system H protein (124 aa).

Residues 22–104 enclose the Lipoyl-binding domain; sequence TGRVGISEFA…FGDGWLVEID (83 aa). Lys-63 carries the post-translational modification N6-lipoyllysine.

Belongs to the GcvH family. In terms of assembly, the glycine cleavage system is composed of four proteins: P, T, L and H. It depends on (R)-lipoate as a cofactor.

In terms of biological role, the glycine cleavage system catalyzes the degradation of glycine. The H protein shuttles the methylamine group of glycine from the P protein to the T protein. This is Probable glycine cleavage system H protein from Halobacterium salinarum (strain ATCC 700922 / JCM 11081 / NRC-1) (Halobacterium halobium).